The sequence spans 130 residues: Small ribosomal subunit protein uS9 (130 aa).

Over residues 99 to 110 (KKAGFLTRDPRM) the composition is skewed to basic and acidic residues. The segment at 99–130 (KKAGFLTRDPRMKERKKYGLKKARRAPQFSKR) is disordered. Residues 111-130 (KERKKYGLKKARRAPQFSKR) show a composition bias toward basic residues.

The protein belongs to the universal ribosomal protein uS9 family.

The protein is Small ribosomal subunit protein uS9 of Clostridium botulinum (strain Eklund 17B / Type B).